The sequence spans 248 residues: NH(3)-dependent NAD(+) synthetase (248 aa).

Residue Gly-31–Ser-38 participates in ATP binding. Asp-37 serves as a coordination point for Mg(2+). Arg-114 contacts deamido-NAD(+). Thr-134 contacts ATP. Glu-139 is a Mg(2+) binding site. Positions 147 and 154 each coordinate deamido-NAD(+). 2 residues coordinate ATP: Lys-163 and Thr-185. His-232–Lys-233 provides a ligand contact to deamido-NAD(+).

The protein belongs to the NAD synthetase family. Homodimer.

The enzyme catalyses deamido-NAD(+) + NH4(+) + ATP = AMP + diphosphate + NAD(+) + H(+). It functions in the pathway cofactor biosynthesis; NAD(+) biosynthesis; NAD(+) from deamido-NAD(+) (ammonia route): step 1/1. Catalyzes the ATP-dependent amidation of deamido-NAD to form NAD. Uses ammonia as a nitrogen source. The polypeptide is NH(3)-dependent NAD(+) synthetase (Mycoplasma pneumoniae (strain ATCC 29342 / M129 / Subtype 1) (Mycoplasmoides pneumoniae)).